The primary structure comprises 391 residues: MSRFLICSFALVLLYPAGIDMYLVGLPRIAADLNASEAQLHIAFSVYLAGMAAAMLFAGKVADRSGRKPVAIPGAALFIIASVFCSLAETSTLFLAGRFLQGLGAGCCYVVAFAILRDTLDDRRRAKVLSLLNGITCIIPVLAPVLGHLIMLKFPWQSLFWAMATMGIAVLMLSLFILKETRPAAPAASDKPRENRESLLNRFFLSRVVITTLSVSVILTFVNTSPVLLMEIMGFERGEYATIMALTAGVSMTVSFSTPFALGIFKPRTLMITSQVLFLAAGITLAVSPSHAISLFGITLICAGFSIGFGVAMSQALGPFSLRAGVASSTLGIAQVCGSSLWIWLAAVVGIGAWNMLIGILIACSIVSLLLIMFVTPGRPVAAHEEIHHHA.

Transmembrane regions (helical) follow at residues 4 to 24 (FLICSFALVLLYPAGIDMYLV), 42 to 62 (IAFSVYLAGMAAAMLFAGKVA), 69 to 89 (PVAIPGAALFIIASVFCSLAE), 93 to 113 (LFLAGRFLQGLGAGCCYVVAF), 131 to 151 (LLNGITCIIPVLAPVLGHLIM), 158 to 178 (SLFWAMATMGIAVLMLSLFIL), 203 to 222 (FFLSRVVITTLSVSVILTFV), 245 to 265 (ALTAGVSMTVSFSTPFALGIF), 269 to 289 (TLMITSQVLFLAAGITLAVSP), 293 to 313 (ISLFGITLICAGFSIGFGVAM), 324 to 346 (AGVASSTLGIAQVCGSSLWIWLA), and 363 to 383 (ACSIVSLLLIMFVTPGRPVAA).

This sequence belongs to the major facilitator superfamily. DHA1 family. MdtL (TC 2.A.1.2.22) subfamily.

Its subcellular location is the cell inner membrane. Its function is as follows. Confers resistance to chloramphenicol. This chain is Multidrug resistance protein MdtL, found in Escherichia fergusonii (strain ATCC 35469 / DSM 13698 / CCUG 18766 / IAM 14443 / JCM 21226 / LMG 7866 / NBRC 102419 / NCTC 12128 / CDC 0568-73).